Consider the following 331-residue polypeptide: Isopentenyl-diphosphate delta-isomerase (331 aa).

Position 4-5 (R4–K5) interacts with substrate. FMN is bound by residues A59–T61, S89, and N116. Substrate is bound at residue Q146. Mg(2+) is bound at residue E147. FMN is bound by residues K178, S203, T208, G252–R254, and S273–R274.

Belongs to the IPP isomerase type 2 family. As to quaternary structure, homooctamer. Dimer of tetramers. Requires FMN as cofactor. NADPH serves as cofactor. The cofactor is Mg(2+).

It is found in the cytoplasm. It carries out the reaction isopentenyl diphosphate = dimethylallyl diphosphate. In terms of biological role, involved in the biosynthesis of isoprenoids. Catalyzes the 1,3-allylic rearrangement of the homoallylic substrate isopentenyl (IPP) to its allylic isomer, dimethylallyl diphosphate (DMAPP). This is Isopentenyl-diphosphate delta-isomerase from Streptococcus mutans serotype c (strain ATCC 700610 / UA159).